A 396-amino-acid chain; its full sequence is MSWSFLTRLLEEIHNHSTFVGKIWLTVLIVFRIVLTAVGGESIYYDEQSKFVCNTEQPGCENVCYDAFAPLSHVRFWVFQIILVATPSVMYLGYAIHKIAKMEHGEADKKAARSKPYAMRWKQHRALEETEEDNEEDPMMYPEMELESDKENKEQSQPKPKHDGRRRIREDGLMKIYVLQLLARTVFEVGFLIGQYFLYGFQVHPFYVCSRLPCPHKIDCFISRPTEKTIFLLIMYGVTGLCLLLNIWEMLHLGFGTIRDSLNSKRRELEDPGAYNYPFTWNTPSAPPGYNIAVKPDQIQYTELSNAKIAYKQNKANTAQEQQYGSHEENLPADLEALQREIRMAQERLDLAVQAYSHQNNPHGPREKKAKVGSKAGSNKSTASSKSGDGKTSVWI.

The Cytoplasmic portion of the chain corresponds to M1–K22. Residues I23 to Y45 traverse the membrane as a helical segment. The Extracellular portion of the chain corresponds to D46–R75. A helical transmembrane segment spans residues F76–A95. The Cytoplasmic segment spans residues I96–K175. Residues E145 to R165 form a disordered region. Residues E147 to S156 show a composition bias toward basic and acidic residues. The chain crosses the membrane as a helical span at residues I176–L198. Residues Y199 to K228 are Extracellular-facing. Residues T229 to W248 traverse the membrane as a helical segment. At E249–I396 the chain is on the cytoplasmic side. The disordered stretch occupies residues V353 to I396. Residues A376–S387 show a composition bias toward polar residues.

It belongs to the connexin family. Gamma-type subfamily. In terms of assembly, a connexon is composed of a hexamer of connexins. Interacts with CNST.

The protein resides in the cell membrane. Its subcellular location is the cell junction. It is found in the gap junction. Functionally, one gap junction consists of a cluster of closely packed pairs of transmembrane channels, the connexons, through which materials of low MW diffuse from one cell to a neighboring cell. The protein is Gap junction gamma-1 protein (GJC1) of Homo sapiens (Human).